The following is a 125-amino-acid chain: Large ribosomal subunit protein bL20 (125 aa).

This sequence belongs to the bacterial ribosomal protein bL20 family.

Binds directly to 23S ribosomal RNA and is necessary for the in vitro assembly process of the 50S ribosomal subunit. It is not involved in the protein synthesizing functions of that subunit. This chain is Large ribosomal subunit protein bL20, found in Methylobacterium nodulans (strain LMG 21967 / CNCM I-2342 / ORS 2060).